The chain runs to 69 residues: MSSLTPLLLRSLTGPARRLMVPRAQVHSKPPREQLGVLDITIGLTSCFVCCLLPAGWVLSHLESYKKRE.

A mitochondrion-targeting transit peptide spans 1–25; the sequence is MSSLTPLLLRSLTGPARRLMVPRAQ. The SIFI-degron motif lies at 2-19; sequence SSLTPLLLRSLTGPARRL. The Mitochondrial matrix segment spans residues 26-36; it reads VHSKPPREQLG. The chain crosses the membrane as a helical span at residues 37–60; that stretch reads VLDITIGLTSCFVCCLLPAGWVLS. Residues 61-69 are Mitochondrial intermembrane-facing; sequence HLESYKKRE.

The protein belongs to the cytochrome c oxidase VIII family. Component of the cytochrome c oxidase (complex IV, CIV), a multisubunit enzyme composed of 14 subunits. The complex is composed of a catalytic core of 3 subunits MT-CO1, MT-CO2 and MT-CO3, encoded in the mitochondrial DNA, and 11 supernumerary subunits COX4I, COX5A, COX5B, COX6A, COX6B, COX6C, COX7A, COX7B, COX7C, COX8 and NDUFA4, which are encoded in the nuclear genome. The complex exists as a monomer or a dimer and forms supercomplexes (SCs) in the inner mitochondrial membrane with NADH-ubiquinone oxidoreductase (complex I, CI) and ubiquinol-cytochrome c oxidoreductase (cytochrome b-c1 complex, complex III, CIII), resulting in different assemblies (supercomplex SCI(1)III(2)IV(1) and megacomplex MCI(2)III(2)IV(2)). In response to mitochondrial stress, the precursor protein is ubiquitinated by the SIFI complex in the cytoplasm before mitochondrial import, leading to its degradation. Within the SIFI complex, UBR4 initiates ubiquitin chain that are further elongated or branched by KCMF1.

It is found in the mitochondrion inner membrane. It participates in energy metabolism; oxidative phosphorylation. Functionally, component of the cytochrome c oxidase, the last enzyme in the mitochondrial electron transport chain which drives oxidative phosphorylation. The respiratory chain contains 3 multisubunit complexes succinate dehydrogenase (complex II, CII), ubiquinol-cytochrome c oxidoreductase (cytochrome b-c1 complex, complex III, CIII) and cytochrome c oxidase (complex IV, CIV), that cooperate to transfer electrons derived from NADH and succinate to molecular oxygen, creating an electrochemical gradient over the inner membrane that drives transmembrane transport and the ATP synthase. Cytochrome c oxidase is the component of the respiratory chain that catalyzes the reduction of oxygen to water. Electrons originating from reduced cytochrome c in the intermembrane space (IMS) are transferred via the dinuclear copper A center (CU(A)) of subunit 2 and heme A of subunit 1 to the active site in subunit 1, a binuclear center (BNC) formed by heme A3 and copper B (CU(B)). The BNC reduces molecular oxygen to 2 water molecules using 4 electrons from cytochrome c in the IMS and 4 protons from the mitochondrial matrix. This Rattus norvegicus (Rat) protein is Cytochrome c oxidase subunit 8A, mitochondrial (Cox8a).